The primary structure comprises 289 residues: Phosphatidylserine decarboxylase proenzyme (289 aa).

Active-site charge relay system; for autoendoproteolytic cleavage activity residues include Asp89, His146, and Ser252. Ser252 acts as the Schiff-base intermediate with substrate; via pyruvic acid; for decarboxylase activity in catalysis. Ser252 is modified (pyruvic acid (Ser); by autocatalysis).

The protein belongs to the phosphatidylserine decarboxylase family. PSD-B subfamily. Prokaryotic type I sub-subfamily. In terms of assembly, heterodimer of a large membrane-associated beta subunit and a small pyruvoyl-containing alpha subunit. The cofactor is pyruvate. Post-translationally, is synthesized initially as an inactive proenzyme. Formation of the active enzyme involves a self-maturation process in which the active site pyruvoyl group is generated from an internal serine residue via an autocatalytic post-translational modification. Two non-identical subunits are generated from the proenzyme in this reaction, and the pyruvate is formed at the N-terminus of the alpha chain, which is derived from the carboxyl end of the proenzyme. The autoendoproteolytic cleavage occurs by a canonical serine protease mechanism, in which the side chain hydroxyl group of the serine supplies its oxygen atom to form the C-terminus of the beta chain, while the remainder of the serine residue undergoes an oxidative deamination to produce ammonia and the pyruvoyl prosthetic group on the alpha chain. During this reaction, the Ser that is part of the protease active site of the proenzyme becomes the pyruvoyl prosthetic group, which constitutes an essential element of the active site of the mature decarboxylase.

It localises to the cell membrane. It catalyses the reaction a 1,2-diacyl-sn-glycero-3-phospho-L-serine + H(+) = a 1,2-diacyl-sn-glycero-3-phosphoethanolamine + CO2. Its pathway is phospholipid metabolism; phosphatidylethanolamine biosynthesis; phosphatidylethanolamine from CDP-diacylglycerol: step 2/2. Functionally, catalyzes the formation of phosphatidylethanolamine (PtdEtn) from phosphatidylserine (PtdSer). The chain is Phosphatidylserine decarboxylase proenzyme from Nitrosospira multiformis (strain ATCC 25196 / NCIMB 11849 / C 71).